A 1524-amino-acid polypeptide reads, in one-letter code: Unhealthy ribosome biogenesis protein 2 homolog (1524 aa).

The protein resides in the nucleus. The protein localises to the nucleolus. Functionally, essential for hematopietic stem cell development through the regulation of p53/TP53 pathway. The polypeptide is Unhealthy ribosome biogenesis protein 2 homolog (URB2) (Homo sapiens (Human)).